An 82-amino-acid chain; its full sequence is Probable 26S proteasome complex subunit dss-1 (82 aa).

Positions 56–82 (NWDDETHESEFSKQLKEELRKSGHQVA) are disordered. A compositionally biased stretch (basic and acidic residues) spans 63-76 (ESEFSKQLKEELRK).

Belongs to the DSS1/SEM1 family. Part of the 26S proteasome. As to expression, expressed in intestinal epithelium and head neurons.

Its subcellular location is the nucleus. The protein localises to the cytoplasm. Functionally, subunit of the 26S proteasome which plays a role in ubiquitin-dependent proteolysis. Has an essential role in oogenesis and larval growth. Required for intestinal function and default lifespan. This Caenorhabditis elegans protein is Probable 26S proteasome complex subunit dss-1 (dss-1).